The following is a 170-amino-acid chain: Protein SprT (170 aa).

The region spanning Leu-22–Ile-165 is the SprT-like domain. A Zn(2+)-binding site is contributed by His-78. Glu-79 is a catalytic residue. His-82 is a binding site for Zn(2+).

It belongs to the SprT family. It depends on Zn(2+) as a cofactor.

Its subcellular location is the cytoplasm. In Yersinia pseudotuberculosis serotype O:1b (strain IP 31758), this protein is Protein SprT.